The sequence spans 146 residues: Catabolic 3-dehydroquinase (146 aa).

Residue tyrosine 24 is the Proton acceptor of the active site. 3 residues coordinate substrate: asparagine 78, histidine 84, and aspartate 91. Histidine 104 serves as the catalytic Proton donor. Residues 105 to 106 and arginine 115 contribute to the substrate site; that span reads IT.

The protein belongs to the type-II 3-dehydroquinase family. As to quaternary structure, homododecamer. Adopts a ring-like structure, composed of an arrangement of two hexameric rings stacked on top of one another.

The enzyme catalyses 3-dehydroquinate = 3-dehydroshikimate + H2O. It functions in the pathway aromatic compound metabolism; 3,4-dihydroxybenzoate biosynthesis; 3,4-dihydroxybenzoate from 3-dehydroquinate: step 1/2. In terms of biological role, is involved in the catabolism of quinate. Allows the utilization of quinate as carbon source via the beta-ketoadipate pathway. The sequence is that of Catabolic 3-dehydroquinase from Scheffersomyces stipitis (strain ATCC 58785 / CBS 6054 / NBRC 10063 / NRRL Y-11545) (Yeast).